A 238-amino-acid polypeptide reads, in one-letter code: Pyridoxine 5'-phosphate synthase (238 aa).

Asn7 is a 3-amino-2-oxopropyl phosphate binding site. 9 to 10 (DH) is a binding site for 1-deoxy-D-xylulose 5-phosphate. Arg18 contacts 3-amino-2-oxopropyl phosphate. Catalysis depends on His43, which acts as the Proton acceptor. The 1-deoxy-D-xylulose 5-phosphate site is built by Arg45 and His50. The active-site Proton acceptor is the Glu70. Thr100 is a 1-deoxy-D-xylulose 5-phosphate binding site. The Proton donor role is filled by His191. 3-amino-2-oxopropyl phosphate is bound by residues Gly192 and 213–214 (GH).

It belongs to the PNP synthase family. In terms of assembly, homooctamer; tetramer of dimers.

The protein localises to the cytoplasm. It carries out the reaction 3-amino-2-oxopropyl phosphate + 1-deoxy-D-xylulose 5-phosphate = pyridoxine 5'-phosphate + phosphate + 2 H2O + H(+). It functions in the pathway cofactor biosynthesis; pyridoxine 5'-phosphate biosynthesis; pyridoxine 5'-phosphate from D-erythrose 4-phosphate: step 5/5. Its function is as follows. Catalyzes the complicated ring closure reaction between the two acyclic compounds 1-deoxy-D-xylulose-5-phosphate (DXP) and 3-amino-2-oxopropyl phosphate (1-amino-acetone-3-phosphate or AAP) to form pyridoxine 5'-phosphate (PNP) and inorganic phosphate. The sequence is that of Pyridoxine 5'-phosphate synthase from Syntrophobacter fumaroxidans (strain DSM 10017 / MPOB).